The primary structure comprises 124 residues: Large ribosomal subunit protein bL12 (124 aa).

The protein belongs to the bacterial ribosomal protein bL12 family. Homodimer. Part of the ribosomal stalk of the 50S ribosomal subunit. Forms a multimeric L10(L12)X complex, where L10 forms an elongated spine to which 2 to 4 L12 dimers bind in a sequential fashion. Binds GTP-bound translation factors.

Forms part of the ribosomal stalk which helps the ribosome interact with GTP-bound translation factors. Is thus essential for accurate translation. This is Large ribosomal subunit protein bL12 from Bacteroides thetaiotaomicron (strain ATCC 29148 / DSM 2079 / JCM 5827 / CCUG 10774 / NCTC 10582 / VPI-5482 / E50).